Here is a 500-residue protein sequence, read N- to C-terminus: Aspartyl/glutamyl-tRNA(Asn/Gln) amidotransferase subunit B (500 aa).

This sequence belongs to the GatB/GatE family. GatB subfamily. As to quaternary structure, heterotrimer of A, B and C subunits.

The enzyme catalyses L-glutamyl-tRNA(Gln) + L-glutamine + ATP + H2O = L-glutaminyl-tRNA(Gln) + L-glutamate + ADP + phosphate + H(+). It catalyses the reaction L-aspartyl-tRNA(Asn) + L-glutamine + ATP + H2O = L-asparaginyl-tRNA(Asn) + L-glutamate + ADP + phosphate + 2 H(+). Allows the formation of correctly charged Asn-tRNA(Asn) or Gln-tRNA(Gln) through the transamidation of misacylated Asp-tRNA(Asn) or Glu-tRNA(Gln) in organisms which lack either or both of asparaginyl-tRNA or glutaminyl-tRNA synthetases. The reaction takes place in the presence of glutamine and ATP through an activated phospho-Asp-tRNA(Asn) or phospho-Glu-tRNA(Gln). The protein is Aspartyl/glutamyl-tRNA(Asn/Gln) amidotransferase subunit B of Brucella melitensis biotype 2 (strain ATCC 23457).